A 216-amino-acid chain; its full sequence is uncharacterized protein (216 aa).

In terms of domain architecture, Integrase catalytic spans 54–215; it reads TATQPNEKWT…SPVNYRTQSL (162 aa).

Belongs to the transposase IS3/IS150/IS904 family.

This is an uncharacterized protein from Haemophilus influenzae (strain ATCC 51907 / DSM 11121 / KW20 / Rd).